The following is a 283-amino-acid chain: Pantothenate synthetase (283 aa).

Residue 30 to 37 (MGFLHEGH) coordinates ATP. Residue His-37 is the Proton donor of the active site. Gln-61 is a (R)-pantoate binding site. Gln-61 contributes to the beta-alanine binding site. Residue 147–150 (GKKD) participates in ATP binding. Gln-153 lines the (R)-pantoate pocket. Residues Val-176 and 184–187 (MSSR) contribute to the ATP site.

It belongs to the pantothenate synthetase family. Homodimer.

It localises to the cytoplasm. The catalysed reaction is (R)-pantoate + beta-alanine + ATP = (R)-pantothenate + AMP + diphosphate + H(+). It functions in the pathway cofactor biosynthesis; (R)-pantothenate biosynthesis; (R)-pantothenate from (R)-pantoate and beta-alanine: step 1/1. Catalyzes the condensation of pantoate with beta-alanine in an ATP-dependent reaction via a pantoyl-adenylate intermediate. The protein is Pantothenate synthetase of Trichlorobacter lovleyi (strain ATCC BAA-1151 / DSM 17278 / SZ) (Geobacter lovleyi).